A 314-amino-acid chain; its full sequence is Taste receptor type 2 member 42 (314 aa).

At 1 to 7 (MATELDK) the chain is on the extracellular side. A helical transmembrane segment spans residues 8–28 (IFLILEIAEFIIGMLGNVFIG). At 29–50 (LVNCSEGIKNQKVFSADFILTC) the chain is on the cytoplasmic side. Residues 51 to 71 (LAISTIGQLFVILFDSFLVGL) traverse the membrane as a helical segment. The Extracellular portion of the chain corresponds to 72-101 (ASHLYTTYRLGKPVIMLWHMTNHLTTWLAT). The chain crosses the membrane as a helical span at residues 102–122 (CLSIFYFFKIAHFPHSLFLWL). Over 123 to 127 (RWRMN) the chain is Cytoplasmic. The chain crosses the membrane as a helical span at residues 128 to 148 (GMIVMLLILSLFLLIFNSLVL). The Extracellular segment spans residues 149–187 (EIFIDISLNIIDKSNLTLYLDESKTVYDKLSILKTLLSL). The N-linked (GlcNAc...) asparagine glycan is linked to Asn-163. The chain crosses the membrane as a helical span at residues 188 to 208 (TSFIPFSLSLTSLLFLFLSLV). Residues 209–238 (RHTRNLKLSSLGSRDSSTEAHRRAMKMVMS) are Cytoplasmic-facing. A helical membrane pass occupies residues 239 to 259 (FLFLFIVHFFSLQVANWIFFM). Residues 260-265 (LWNNKY) lie on the Extracellular side of the membrane. Residues 266 to 286 (IKFAMLALNAFPSCHSFILIL) traverse the membrane as a helical segment. The Cytoplasmic portion of the chain corresponds to 287-314 (GNSKLRQTAVRLLWHLRNYTKTPNPLPL).

This sequence belongs to the G-protein coupled receptor T2R family.

It is found in the membrane. Receptor that may play a role in the perception of bitterness and is gustducin-linked. May play a role in sensing the chemical composition of the gastrointestinal content. The activity of this receptor may stimulate alpha gustducin, mediate PLC-beta-2 activation and lead to the gating of TRPM5. The chain is Taste receptor type 2 member 42 (TAS2R42) from Pan troglodytes (Chimpanzee).